Here is a 65-residue protein sequence, read N- to C-terminus: Large ribosomal subunit protein bL35 (65 aa).

It belongs to the bacterial ribosomal protein bL35 family.

This is Large ribosomal subunit protein bL35 from Erwinia tasmaniensis (strain DSM 17950 / CFBP 7177 / CIP 109463 / NCPPB 4357 / Et1/99).